A 37-amino-acid chain; its full sequence is Photosystem I reaction center subunit VIII (37 aa).

A helical membrane pass occupies residues 7–27 (LPSIFVPLVGLVFPAIAMASL).

Belongs to the PsaI family.

It localises to the plastid. The protein resides in the chloroplast thylakoid membrane. Its function is as follows. May help in the organization of the PsaL subunit. This is Photosystem I reaction center subunit VIII from Populus alba (White poplar).